Reading from the N-terminus, the 20-residue chain is Serum amyloid P-component (20 aa).

The Pentraxin (PTX) domain maps to 1–20 (ZPIDLMGKVFVFDKELSPBI).

Belongs to the pentraxin family. In terms of assembly, homopentamer. Pentraxin (or pentaxin) have a discoid arrangement of 5 non-covalently bound subunits.

Its subcellular location is the secreted. In Pleuronectes platessa (European plaice), this protein is Serum amyloid P-component.